Consider the following 322-residue polypeptide: Gluconeogenesis factor (322 aa).

Belongs to the gluconeogenesis factor family.

It localises to the cytoplasm. Functionally, required for morphogenesis under gluconeogenic growth conditions. The protein is Gluconeogenesis factor of Listeria innocua serovar 6a (strain ATCC BAA-680 / CLIP 11262).